Reading from the N-terminus, the 463-residue chain is Quinolone resistance protein NorB (463 aa).

14 helical membrane-spanning segments follow: residues 17–37 (IGIVLSVITFWLFAQSLVNVV), 53–73 (IAVSITALFSGMFVVGAGGLA), 86–106 (IILNILGSLLIIISNIPLLLI), 107–127 (IGRLIQGLSAACIMPATLSII), 142–162 (YWSIGSWGGSGVCSFFGGAVA), 165–185 (LGWRWIFILSIIISLIALFLI), 201–221 (FDIKGLVLLVIMLLSLNILIT), 230–250 (SLLFITLLAIAIGSFSLFIVL), 273–293 (TASNFLLNGVAGTLIVANTFV), 299–319 (YSSLQAGSLSITYLVMVLIMI), 334–354 (PMLIGTGVLIVGECLISLTFL), 357–377 (IFYVICCIIGYLFFGLGLGIY), 403–423 (MASALGGAFGVALSGAVYAIV), and 435–455 (IALWLNAGMGILSFVIILLLV).

This sequence belongs to the major facilitator superfamily. TCR/Tet family.

The protein resides in the cell membrane. Functionally, multidrug efflux pump that acts independently of NorA and is one of the factors that confers resistance against diverse quinolones and chemical compounds. The polypeptide is Quinolone resistance protein NorB (norB) (Staphylococcus aureus (strain USA300)).